Here is a 185-residue protein sequence, read N- to C-terminus: Ribosome maturation factor RimM (185 aa).

The region spanning 106–185 (EGDYYWKDLM…SIEVDWDPGF (80 aa)) is the PRC barrel domain.

It belongs to the RimM family. As to quaternary structure, binds ribosomal protein uS19.

The protein resides in the cytoplasm. Its function is as follows. An accessory protein needed during the final step in the assembly of 30S ribosomal subunit, possibly for assembly of the head region. Essential for efficient processing of 16S rRNA. May be needed both before and after RbfA during the maturation of 16S rRNA. It has affinity for free ribosomal 30S subunits but not for 70S ribosomes. This Shigella dysenteriae serotype 1 (strain Sd197) protein is Ribosome maturation factor RimM.